Here is a 694-residue protein sequence, read N- to C-terminus: Glycine--tRNA ligase beta subunit (694 aa).

Belongs to the class-II aminoacyl-tRNA synthetase family. As to quaternary structure, tetramer of two alpha and two beta subunits.

The protein localises to the cytoplasm. It catalyses the reaction tRNA(Gly) + glycine + ATP = glycyl-tRNA(Gly) + AMP + diphosphate. The protein is Glycine--tRNA ligase beta subunit of Shewanella denitrificans (strain OS217 / ATCC BAA-1090 / DSM 15013).